The primary structure comprises 518 residues: Retinal dehydrogenase 2 (518 aa).

NAD(+)-binding positions include 184–186, 210–213, and 264–266; these read IPW, KPAE, and STE. Glutamate 286 acts as the Proton acceptor in catalysis. The active-site Nucleophile is the cysteine 320. NAD(+) is bound by residues 366–370 and glutamate 417; that span reads KQYNK.

It belongs to the aldehyde dehydrogenase family. In terms of assembly, homotetramer.

It localises to the cytoplasm. It carries out the reaction retinal + NAD(+) + H2O = retinoate + NADH + 2 H(+). It catalyses the reaction all-trans-retinal + NAD(+) + H2O = all-trans-retinoate + NADH + 2 H(+). The enzyme catalyses all-trans-13,14-dihydroretinal + NAD(+) + H2O = all-trans-13,14-dihydroretinoate + NADH + 2 H(+). It functions in the pathway cofactor metabolism; retinol metabolism. Its function is as follows. Catalyzes the NAD-dependent oxidation of aldehyde substrates, such as all-trans-retinal and all-trans-13,14-dihydroretinal, to their corresponding carboxylic acids, all-trans-retinoate and all-trans-13,14-dihydroretinoate, respectively. Retinoate signaling is critical for the transcriptional control of many genes, for instance it is crucial for initiation of meiosis in both male and female. Recognizes retinal as substrate, both in its free form and when bound to cellular retinol-binding protein. Lacks activity with benzaldehyde, acetaldehyde and octanal. Displays complete lack of activity with citral. The sequence is that of Retinal dehydrogenase 2 (ALDH1A2) from Gallus gallus (Chicken).